Here is a 93-residue protein sequence, read N- to C-terminus: Small ribosomal subunit protein uS17 (93 aa).

Belongs to the universal ribosomal protein uS17 family. In terms of assembly, part of the 30S ribosomal subunit.

Functionally, one of the primary rRNA binding proteins, it binds specifically to the 5'-end of 16S ribosomal RNA. The chain is Small ribosomal subunit protein uS17 from Bordetella avium (strain 197N).